Here is a 513-residue protein sequence, read N- to C-terminus: uncharacterized protein (513 aa).

The CYTH domain maps to 11–219 (HLEVERKFDV…SKLARVLGAT (209 aa)). One can recognise a CHAD domain in the interval 228–506 (PQPPADPVHR…LEAALRKLDK (279 aa)).

This is an uncharacterized protein from Mycobacterium tuberculosis (strain ATCC 25618 / H37Rv).